We begin with the raw amino-acid sequence, 291 residues long: Pantothenate synthetase (291 aa).

30-37 contributes to the ATP binding site; the sequence is MGNLHEGH. His37 serves as the catalytic Proton donor. Gln61 is a binding site for (R)-pantoate. Residue Gln61 coordinates beta-alanine. 149 to 152 is a binding site for ATP; sequence GEKD. Gln155 is a binding site for (R)-pantoate. ATP-binding positions include Val178 and 186 to 189; that span reads MSSR.

It belongs to the pantothenate synthetase family. As to quaternary structure, homodimer.

Its subcellular location is the cytoplasm. The catalysed reaction is (R)-pantoate + beta-alanine + ATP = (R)-pantothenate + AMP + diphosphate + H(+). It functions in the pathway cofactor biosynthesis; (R)-pantothenate biosynthesis; (R)-pantothenate from (R)-pantoate and beta-alanine: step 1/1. Functionally, catalyzes the condensation of pantoate with beta-alanine in an ATP-dependent reaction via a pantoyl-adenylate intermediate. The polypeptide is Pantothenate synthetase (Aliivibrio fischeri (strain ATCC 700601 / ES114) (Vibrio fischeri)).